The primary structure comprises 203 residues: Holliday junction branch migration complex subunit RuvA (203 aa).

The segment at 1-64 (MFAYFRGRLT…EDAFLLYGFS (64 aa)) is domain I. The segment at 65-143 (SESERQLFRL…KMSPDGGKTI (79 aa)) is domain II. The interval 144 to 150 (ASGSGGN) is flexible linker. Positions 151 to 203 (LALQIKDDALNALITLGFSKPAAQKAVTGILEGNPSLSVEEVVKSALVSIHNS) are domain III.

Belongs to the RuvA family. Homotetramer. Forms an RuvA(8)-RuvB(12)-Holliday junction (HJ) complex. HJ DNA is sandwiched between 2 RuvA tetramers; dsDNA enters through RuvA and exits via RuvB. An RuvB hexamer assembles on each DNA strand where it exits the tetramer. Each RuvB hexamer is contacted by two RuvA subunits (via domain III) on 2 adjacent RuvB subunits; this complex drives branch migration. In the full resolvosome a probable DNA-RuvA(4)-RuvB(12)-RuvC(2) complex forms which resolves the HJ.

The protein localises to the cytoplasm. Its function is as follows. The RuvA-RuvB-RuvC complex processes Holliday junction (HJ) DNA during genetic recombination and DNA repair, while the RuvA-RuvB complex plays an important role in the rescue of blocked DNA replication forks via replication fork reversal (RFR). RuvA specifically binds to HJ cruciform DNA, conferring on it an open structure. The RuvB hexamer acts as an ATP-dependent pump, pulling dsDNA into and through the RuvAB complex. HJ branch migration allows RuvC to scan DNA until it finds its consensus sequence, where it cleaves and resolves the cruciform DNA. The sequence is that of Holliday junction branch migration complex subunit RuvA from Chlorobium limicola (strain DSM 245 / NBRC 103803 / 6330).